Reading from the N-terminus, the 406-residue chain is MGPSTPLLILFLLSWSGPLQGQQHHLVEYMERRLAALEERLAQCQDQSSRHAAELRDFKNKMLPLLEVAEKEREALRTEADTISGRVDRLEREVDYLETQNPALPCVEFDEKVTGGPGTKGKGRRNEKYDMVTDCGYTISQVRSMKILKRFGGPAGLWTKDPLGQTEKIYVLDGTQNDTAFVFPRLRDFTLAMAARKASRVRVPFPWVGTGQLVYGGFLYFARRPPGRPGGGGEMENTLQLIKFHLANRTVVDSSVFPAEGLIPPYGLTADTYIDLAADEEGLWAVYATREDDRHLCLAKLDPQTLDTEQQWDTPCPRENAEAAFVICGTLYVVYNTRPASRARIQCSFDASGTLTPERAALPYFPRRYGAHASLRYNPRERQLYAWDDGYQIVYKLEMRKKEEEV.

Positions 1–21 are cleaved as a signal peptide; it reads MGPSTPLLILFLLSWSGPLQG. A coiled-coil region spans residues 25–101; the sequence is HLVEYMERRL…REVDYLETQN (77 aa). An Olfactomedin-like domain is found at 134–401; it reads DCGYTISQVR…QIVYKLEMRK (268 aa). A disulfide bridge links Cys135 with Cys328. 2 N-linked (GlcNAc...) asparagine glycosylation sites follow: Asn177 and Asn248.

This sequence belongs to the OLFML3 family. Abundant in placenta, moderate in liver and heart, whereas fairly weak in other tissues examined. On term placenta, mainly localized extracellularly surrounding the syncytiotrophoblastic cells and very rarely expressed in the maternal decidua layer.

It is found in the secreted. Its function is as follows. Secreted scaffold protein that plays an essential role in dorsoventral patterning during early development. Stabilizes axial formation by restricting chordin (CHRD) activity on the dorsal side. Acts by facilitating the association between the tolloid proteases and their substrate chordin (CHRD), leading to enhance chordin (CHRD) degradation. May have matrix-related function involved in placental and embryonic development, or play a similar role in other physiological processes. This chain is Olfactomedin-like protein 3 (OLFML3), found in Homo sapiens (Human).